Here is a 228-residue protein sequence, read N- to C-terminus: Lipoprotein-releasing system ATP-binding protein LolD (228 aa).

The ABC transporter domain occupies 6-228; sequence IKCINLNKSY…ENNQIFNYES (223 aa). 42–49 lines the ATP pocket; the sequence is GKSGSGKT.

It belongs to the ABC transporter superfamily. Lipoprotein translocase (TC 3.A.1.125) family.

It localises to the cell inner membrane. Usually LolD forms an ABC transporter complex with LolC and LolE involved in the translocation of lipoprotein, in an ATP-dependent manner. However, LolE is certainly not functional as it is frameshifted. The sequence is that of Lipoprotein-releasing system ATP-binding protein LolD from Buchnera aphidicola subsp. Acyrthosiphon pisum (strain APS) (Acyrthosiphon pisum symbiotic bacterium).